The chain runs to 260 residues: 5'-nucleotidase SurE (260 aa).

Residues Asp10, Asp11, Ser41, and Asn95 each contribute to the a divalent metal cation site.

This sequence belongs to the SurE nucleotidase family. The cofactor is a divalent metal cation.

The protein resides in the cytoplasm. The enzyme catalyses a ribonucleoside 5'-phosphate + H2O = a ribonucleoside + phosphate. Functionally, nucleotidase that shows phosphatase activity on nucleoside 5'-monophosphates. This chain is 5'-nucleotidase SurE, found in Methanoregula boonei (strain DSM 21154 / JCM 14090 / 6A8).